We begin with the raw amino-acid sequence, 789 residues long: Probable phosphoketolase (789 aa).

The protein belongs to the XFP family. It depends on thiamine diphosphate as a cofactor.

This chain is Probable phosphoketolase, found in Brucella abortus (strain 2308).